A 1958-amino-acid polypeptide reads, in one-letter code: Probable Rho GTPase-activating protein CG5521 (1958 aa).

Disordered regions lie at residues 1-21, 400-424, and 635-804; these read MFTKKSHADVKKSTAKLQDSK, PPFLLEPNDDPPPPSNAGGTPRSQR, and GSVW…GIEG. Residues 400–414 are compositionally biased toward pro residues; sequence PPFLLEPNDDPPPPS. Low complexity predominate over residues 640–656; the sequence is GSGSNSAANGGSAASAA. 3 positions are modified to phosphoserine: Ser718, Ser764, and Ser767. The segment covering 758–774 has biased composition (basic and acidic residues); sequence DLRRAMSLDSLARKGDA. Residues 775–785 are compositionally biased toward acidic residues; it reads EETDSYQEGDN. Phosphoserine occurs at positions 787, 791, 793, and 795. A compositionally biased stretch (polar residues) spans 788–800; sequence GAGSRSPSPTASS. Position 980 is a phosphotyrosine (Tyr980). Residues 1534–1568 are disordered; that stretch reads HSTQAPSPALRHASSNSSLQQPDQRSLHSTTASFD. Polar residues predominate over residues 1546–1568; that stretch reads ASSNSSLQQPDQRSLHSTTASFD. Ser1551 is modified (phosphoserine). One can recognise a Rap-GAP domain in the interval 1612–1819; it reads LRNVDLQKCR…EERNRSLDSV (208 aa). A disordered region spans residues 1903–1958; it reads ATGMSSASPRGPRKLGAPFKSVTKKHSLQHIAVGGGAGAGGDTPPESPTLPQRRFK. Phosphothreonine is present on Thr1945. Ser1949 is modified (phosphoserine).

The polypeptide is Probable Rho GTPase-activating protein CG5521 (Drosophila melanogaster (Fruit fly)).